The primary structure comprises 390 residues: Chorismate synthase 2 (390 aa).

Residues arginine 39 and arginine 45 each coordinate NADP(+). FMN is bound by residues 132 to 134, 253 to 254, glycine 298, 313 to 317, and arginine 339; these read RSS, NA, and KPIPT.

This sequence belongs to the chorismate synthase family. In terms of assembly, homotetramer. FMNH2 is required as a cofactor.

It catalyses the reaction 5-O-(1-carboxyvinyl)-3-phosphoshikimate = chorismate + phosphate. It functions in the pathway metabolic intermediate biosynthesis; chorismate biosynthesis; chorismate from D-erythrose 4-phosphate and phosphoenolpyruvate: step 7/7. In terms of biological role, catalyzes the anti-1,4-elimination of the C-3 phosphate and the C-6 proR hydrogen from 5-enolpyruvylshikimate-3-phosphate (EPSP) to yield chorismate, which is the branch point compound that serves as the starting substrate for the three terminal pathways of aromatic amino acid biosynthesis. This reaction introduces a second double bond into the aromatic ring system. The protein is Chorismate synthase 2 of Bacillus thuringiensis (strain Al Hakam).